The following is a 475-amino-acid chain: Sulfate adenylyltransferase subunit 1 (475 aa).

The 215-residue stretch at 25-239 folds into the tr-type G domain; it reads KSLLRFLTCG…EVLETVEIQR (215 aa). The G1 stretch occupies residues 34–41; sequence GSVDDGKS. 34-41 is a binding site for GTP; it reads GSVDDGKS. The tract at residues 92-96 is G2; sequence GITID. Positions 113–116 are G3; that stretch reads DTPG. Residues 113 to 117 and 168 to 171 contribute to the GTP site; these read DTPGH and NKMD. The tract at residues 168–171 is G4; that stretch reads NKMD. The tract at residues 206-208 is G5; it reads SAL.

This sequence belongs to the TRAFAC class translation factor GTPase superfamily. Classic translation factor GTPase family. CysN/NodQ subfamily. As to quaternary structure, heterodimer composed of CysD, the smaller subunit, and CysN.

It catalyses the reaction sulfate + ATP + H(+) = adenosine 5'-phosphosulfate + diphosphate. Its pathway is sulfur metabolism; hydrogen sulfide biosynthesis; sulfite from sulfate: step 1/3. Functionally, with CysD forms the ATP sulfurylase (ATPS) that catalyzes the adenylation of sulfate producing adenosine 5'-phosphosulfate (APS) and diphosphate, the first enzymatic step in sulfur assimilation pathway. APS synthesis involves the formation of a high-energy phosphoric-sulfuric acid anhydride bond driven by GTP hydrolysis by CysN coupled to ATP hydrolysis by CysD. The protein is Sulfate adenylyltransferase subunit 1 of Citrobacter koseri (strain ATCC BAA-895 / CDC 4225-83 / SGSC4696).